The chain runs to 79 residues: Cyclin-dependent kinases regulatory subunit 2 (79 aa).

An N6-acetyllysine modification is found at K4.

This sequence belongs to the CKS family. Forms a homohexamer that can probably bind six kinase subunits.

Functionally, binds to the catalytic subunit of the cyclin dependent kinases and is essential for their biological function. The sequence is that of Cyclin-dependent kinases regulatory subunit 2 (CKS2) from Bos taurus (Bovine).